Consider the following 175-residue polypeptide: Ribosome maturation factor RimM (175 aa).

A PRC barrel domain is found at 96–175 (EGDFYWHDLI…TIEVDWDAGF (80 aa)).

This sequence belongs to the RimM family. In terms of assembly, binds ribosomal protein uS19.

Its subcellular location is the cytoplasm. In terms of biological role, an accessory protein needed during the final step in the assembly of 30S ribosomal subunit, possibly for assembly of the head region. Essential for efficient processing of 16S rRNA. May be needed both before and after RbfA during the maturation of 16S rRNA. It has affinity for free ribosomal 30S subunits but not for 70S ribosomes. In Histophilus somni (strain 129Pt) (Haemophilus somnus), this protein is Ribosome maturation factor RimM.